The following is a 312-amino-acid chain: DNA-directed RNA polymerase subunit alpha (312 aa).

Positions 1-229 are alpha N-terminal domain (alpha-NTD); sequence MLQYQIDRIE…ELFQPLATVT (229 aa). An alpha C-terminal domain (alpha-CTD) region spans residues 239–312; that stretch reads EPTAEAQIPL…IQIPQSRTSA (74 aa).

The protein belongs to the RNA polymerase alpha chain family. In cyanobacteria the RNAP catalytic core is composed of 2 alpha, 1 beta, 1 beta', 1 gamma and 1 omega subunit. When a sigma factor is associated with the core the holoenzyme is formed, which can initiate transcription.

The catalysed reaction is RNA(n) + a ribonucleoside 5'-triphosphate = RNA(n+1) + diphosphate. Functionally, DNA-dependent RNA polymerase catalyzes the transcription of DNA into RNA using the four ribonucleoside triphosphates as substrates. The sequence is that of DNA-directed RNA polymerase subunit alpha from Synechococcus sp. (strain WH7803).